A 278-amino-acid chain; its full sequence is Release factor glutamine methyltransferase (278 aa).

Residues 120 to 124, aspartate 143, and asparagine 184 contribute to the S-adenosyl-L-methionine site; that span reads GTGTG. Residue 184 to 187 coordinates substrate; sequence NPPY.

It belongs to the protein N5-glutamine methyltransferase family. PrmC subfamily.

It catalyses the reaction L-glutaminyl-[peptide chain release factor] + S-adenosyl-L-methionine = N(5)-methyl-L-glutaminyl-[peptide chain release factor] + S-adenosyl-L-homocysteine + H(+). Functionally, methylates the class 1 translation termination release factors RF1/PrfA and RF2/PrfB on the glutamine residue of the universally conserved GGQ motif. This Deinococcus radiodurans (strain ATCC 13939 / DSM 20539 / JCM 16871 / CCUG 27074 / LMG 4051 / NBRC 15346 / NCIMB 9279 / VKM B-1422 / R1) protein is Release factor glutamine methyltransferase.